A 207-amino-acid chain; its full sequence is Cytochrome c biogenesis ATP-binding export protein CcmA (207 aa).

An ABC transporter domain is found at 2-204 (LECENLSCTR…TTIDIRNFNR (203 aa)). Position 34-41 (34-41 (GPNGSGKT)) interacts with ATP.

Belongs to the ABC transporter superfamily. CcmA exporter (TC 3.A.1.107) family. As to quaternary structure, the complex is composed of two ATP-binding proteins (CcmA) and two transmembrane proteins (CcmB).

The protein resides in the cell membrane. The enzyme catalyses heme b(in) + ATP + H2O = heme b(out) + ADP + phosphate + H(+). Part of the ABC transporter complex CcmAB involved in the biogenesis of c-type cytochromes; once thought to export heme, this seems not to be the case, but its exact role is uncertain. Responsible for energy coupling to the transport system. The sequence is that of Cytochrome c biogenesis ATP-binding export protein CcmA from Wolbachia pipientis wMel.